We begin with the raw amino-acid sequence, 192 residues long: Dynein axonemal light chain 1 (192 aa).

LRR repeat units follow at residues 49–70 (NCER…NGLK), 71–92 (NLKI…EAVG), 94–115 (TLEE…HVMK), and 116–137 (KLKV…LKLA). Positions 150 to 192 (NPLEEKYSADGNWIEEATKRLPKLKKLDGNPVIKQEEETEGES) constitute an LRRCT domain.

The protein belongs to the dynein light chain LC1-type family. In terms of assembly, interacts with DNAH5, a outer arm dynein heavy chain. Interacts with tubulin located within the A-tubule of the outer doublets in a ATP-independent manner.

The protein resides in the cytoplasm. It is found in the cytoskeleton. The protein localises to the cilium axoneme. Part of the multisubunit axonemal ATPase complexes that generate the force for cilia motility and govern beat frequency. Component of the outer arm dynein (ODA). May be involved in a mechanosensory feedback mechanism controlling ODA activity based on external conformational cues by tethering the outer arm dynein heavy chain (DNAH5) to the microtubule within the axoneme. In Danio rerio (Zebrafish), this protein is Dynein axonemal light chain 1 (dnal1).